The chain runs to 309 residues: MSYASEVKKELTSLEVHEKNAKAELMALIRMNGAIGINNRQLTLNTQTENPAIARRIYSLLKEFYHLEAELSVRRKMKLKKNNLYIVRLRTGVKELLNDLSILKDDFQINEKVPEGLLTEESELRSYLRGAFLASGSVNNPETSRYHLEIYSLYESHNQMIADWINKYNLNARTTERRSGYIVYLKEAEHIADFLQLIGATNSMLKFEDVRIMRDMRNSVNRLVNCETANLNKVANASMKQINNIQFIDETVGLGELPPKLREVAEARLIHREVSLKELGELVPGGPISKSGINHRLRKINQYAEKLRA.

A DNA-binding region (H-T-H motif) is located at residues 275–309; that stretch reads SLKELGELVPGGPISKSGINHRLRKINQYAEKLRA.

Belongs to the WhiA family.

In terms of biological role, involved in cell division and chromosome segregation. The protein is Probable cell division protein WhiA of Pediococcus pentosaceus (strain ATCC 25745 / CCUG 21536 / LMG 10740 / 183-1w).